The chain runs to 161 residues: Large ribosomal subunit protein uL10 (161 aa).

Belongs to the universal ribosomal protein uL10 family. As to quaternary structure, part of the ribosomal stalk of the 50S ribosomal subunit. The N-terminus interacts with L11 and the large rRNA to form the base of the stalk. The C-terminus forms an elongated spine to which L12 dimers bind in a sequential fashion forming a multimeric L10(L12)X complex.

Functionally, forms part of the ribosomal stalk, playing a central role in the interaction of the ribosome with GTP-bound translation factors. This Campylobacter fetus subsp. fetus (strain 82-40) protein is Large ribosomal subunit protein uL10.